A 345-amino-acid chain; its full sequence is RNA polymerase II holoenzyme cyclin-like subunit (345 aa).

Residues 53–144 (QQINRLGKRM…IGECEFYLIS (92 aa)) form the Cyclin N-terminal domain. The disordered stretch occupies residues 256–285 (GLTPQSSSGLQAMLPPQSPAGEGPAEGNKN).

This sequence belongs to the cyclin family. Cyclin C subfamily. Component of the srb8-11 complex, a regulatory module of the Mediator complex.

The protein resides in the nucleus. Its function is as follows. Component of the srb8-11 complex. The srb8-11 complex is a regulatory module of the Mediator complex which is itself involved in regulation of basal and activated RNA polymerase II-dependent transcription. The srb8-11 complex may be involved in the transcriptional repression of a subset of genes regulated by Mediator. It may inhibit the association of the Mediator complex with RNA polymerase II to form the holoenzyme complex. The srb8-11 complex phosphorylates the C-terminal domain (CTD) of the largest subunit of RNA polymerase II. In Neurospora crassa (strain ATCC 24698 / 74-OR23-1A / CBS 708.71 / DSM 1257 / FGSC 987), this protein is RNA polymerase II holoenzyme cyclin-like subunit (ssn8).